The primary structure comprises 330 residues: Transcriptional regulatory protein PHO23 (330 aa).

The disordered stretch occupies residues E139–P272. The span at T231–A254 shows a compositional bias: polar residues. The span at S255–I269 shows a compositional bias: low complexity. The PHD-type zinc-finger motif lies at P280 to K329. Residues C283, C285, C296, C301, H307, C310, C323, and C326 each contribute to the Zn(2+) site.

Belongs to the ING family. Interacts with H3K4me3 and to a lesser extent with H3K4me2. Component of the RPD3C(L) complex composed of at least ASH1, CTI6, DEP1, PHO23, RPD3, RXT2, RXT3, SAP30, SDS3, SIN3, UME1 and UME6.

The protein resides in the nucleus. In terms of biological role, component of the RPD3C(L) histone deacetylase complex (HDAC) responsible for the deacetylation of lysine residues on the N-terminal part of the core histones (H2A, H2B, H3 and H4). Histone deacetylation gives a tag for epigenetic repression and plays an important role in transcriptional regulation, cell cycle progression and developmental events. In Saccharomyces cerevisiae (strain ATCC 204508 / S288c) (Baker's yeast), this protein is Transcriptional regulatory protein PHO23 (PHO23).